The chain runs to 394 residues: 4-hydroxyphenylpyruvate dioxygenase (394 aa).

2 consecutive VOC domains span residues 18 to 149 (SFHH…LLEY) and 181 to 339 (FIDH…IFTK). Fe cation is bound by residues histidine 184, histidine 267, and glutamate 350.

The protein belongs to the 4HPPD family. As to quaternary structure, homodimer. It depends on Fe cation as a cofactor.

The protein resides in the cytoplasm. It localises to the endoplasmic reticulum membrane. The protein localises to the golgi apparatus membrane. It catalyses the reaction 3-(4-hydroxyphenyl)pyruvate + O2 = homogentisate + CO2. The protein operates within amino-acid degradation; L-phenylalanine degradation; acetoacetate and fumarate from L-phenylalanine: step 3/6. Catalyzes the conversion of 4-hydroxyphenylpyruvic acid to homogentisic acid, one of the steps in tyrosine catabolism. This Xenopus tropicalis (Western clawed frog) protein is 4-hydroxyphenylpyruvate dioxygenase (hpd).